A 393-amino-acid polypeptide reads, in one-letter code: Messenger RNA-binding inhibitor of apoptosis 1 (393 aa).

Residues 12 to 76 are KH 1-like; it reads ELYIPQKMKA…EKILRDVWRK (65 aa). The KH 2-like stretch occupies residues 79–157; that stretch reads VQIMIREAAL…MMIECLTEHF (79 aa). The segment at 259–322 is KH 3-like; that stretch reads EKIKQWIPTT…NKEQCQEARN (64 aa). The tract at residues 328-393 is disordered; the sequence is MQSHQDKPAS…LTPRKLSPSD (66 aa). Low complexity predominate over residues 345–359; that stretch reads STPGSPFTSDSSSTT.

May interact with wago-4. Expressed throughout the germline and in oocytes (at protein level).

The protein resides in the cytoplasm. It is found in the perinuclear region. Its function is as follows. RNA-binding protein which binds to its own mRNA and target mRNAs to negatively regulate gene expression to modulate apoptosis and differentiation in the germline. Negatively regulates the expression of the argonaute protein wago-4, and may thus play a role in RNA-mediated gene silencing (RNAi) in the germline. In Caenorhabditis elegans, this protein is Messenger RNA-binding inhibitor of apoptosis 1.